The sequence spans 119 residues: UPF0102 protein SGR_1878 (119 aa).

The protein belongs to the UPF0102 family.

This Streptomyces griseus subsp. griseus (strain JCM 4626 / CBS 651.72 / NBRC 13350 / KCC S-0626 / ISP 5235) protein is UPF0102 protein SGR_1878.